A 115-amino-acid polypeptide reads, in one-letter code: MARAKNGTVHVARRKRILKKTKGFWGTKKSNYKKAKDTLXKGMMYATRDRKVRKRDFRRLWISRISAALSDTGVTYSRFIEGLLKSNIKINRKILSNLAIEDVEAFKKIVLEIRR.

It belongs to the bacterial ribosomal protein bL20 family.

Binds directly to 23S ribosomal RNA and is necessary for the in vitro assembly process of the 50S ribosomal subunit. It is not involved in the protein synthesizing functions of that subunit. This Borreliella burgdorferi (strain ATCC 35210 / DSM 4680 / CIP 102532 / B31) (Borrelia burgdorferi) protein is Large ribosomal subunit protein bL20 (rplT).